The primary structure comprises 207 residues: Casparian strip membrane protein 1 (207 aa).

Residues methionine 1–glutamate 12 are compositionally biased toward polar residues. The interval methionine 1–leucine 24 is disordered. Residues methionine 1–glycine 48 are Cytoplasmic-facing. A helical membrane pass occupies residues leucine 49–isoleucine 69. Topologically, residues alanine 70–threonine 98 are extracellular. Residues phenylalanine 99–isoleucine 119 form a helical membrane-spanning segment. Residues valine 120–aspartate 138 lie on the Cytoplasmic side of the membrane. The helical transmembrane segment at threonine 139–alanine 159 threads the bilayer. The Extracellular segment spans residues histidine 160–glycine 184. A helical transmembrane segment spans residues alanine 185–phenylalanine 205. At serine 206–leucine 207 the chain is on the cytoplasmic side.

Belongs to the Casparian strip membrane proteins (CASP) family. In terms of assembly, homodimer and heterodimers.

It is found in the cell membrane. In terms of biological role, regulates membrane-cell wall junctions and localized cell wall deposition. Required for establishment of the Casparian strip membrane domain (CSD) and the subsequent formation of Casparian strips, a cell wall modification of the root endodermis that determines an apoplastic barrier between the intraorganismal apoplasm and the extraorganismal apoplasm and prevents lateral diffusion. This is Casparian strip membrane protein 1 from Taraxacum kok-saghyz (Russian dandelion).